The sequence spans 461 residues: MNVLLQELFIIILSAGKGKRMFTSIPKVLHKLAGKPILQHIIDKVLYLKAKKINIVYGYEGKLLRKKIISRGFSLNWTLQSEQNGTGHAVQQVIFKEIGNDNDKILILYGDVPLISINTLRKLLYSHSGFNISLLTAVIDSPDGYGRIIRKNGKISKIIEHEDALSIDKNIREINTGVMVVNRYYLRFWLNKLLNKRNKDKEIYLTDIISIAYKSGNIINSVQPEKVFEIFGINNRFQLMKLEKIYQIEQAKKLLLNGVTLSDYNRFDLRGTLKHGKDIFIDINVVLKGSVIIGDRVKIGNGCVLKNVIINNDVIIHPYSIIEDACLDSNSVIGPFAHIHSKSKIKKNVHVGNFVEIKNTIFGKNSKVGHLSYLGDSDIGKNVNIGAGTITCNFDGKKKNKTIIKNNVFIGANSELIAPVIINSGAVVGAGTTVTKNINRKDKIISRIRQFSILRKENNSK.

Positions 1-236 (MNVLLQELFI…VFEIFGINNR (236 aa)) are pyrophosphorylase. Residues Lys27, Gln80, 85 to 86 (GT), 109 to 111 (YGD), Gly146, Glu160, Asn175, and Asn234 each bind UDP-N-acetyl-alpha-D-glucosamine. Residue Asp111 participates in Mg(2+) binding. Asn234 lines the Mg(2+) pocket. A linker region spans residues 237-257 (FQLMKLEKIYQIEQAKKLLLN). The N-acetyltransferase stretch occupies residues 258-461 (GVTLSDYNRF…SILRKENNSK (204 aa)). A UDP-N-acetyl-alpha-D-glucosamine-binding site is contributed by Lys358. Catalysis depends on His370, which acts as the Proton acceptor. 2 residues coordinate UDP-N-acetyl-alpha-D-glucosamine: Tyr373 and Asn384. The acetyl-CoA site is built by Ala387, Ala430, and Arg447.

The protein in the N-terminal section; belongs to the N-acetylglucosamine-1-phosphate uridyltransferase family. In the C-terminal section; belongs to the transferase hexapeptide repeat family. As to quaternary structure, homotrimer. Mg(2+) serves as cofactor.

It is found in the cytoplasm. It carries out the reaction alpha-D-glucosamine 1-phosphate + acetyl-CoA = N-acetyl-alpha-D-glucosamine 1-phosphate + CoA + H(+). It catalyses the reaction N-acetyl-alpha-D-glucosamine 1-phosphate + UTP + H(+) = UDP-N-acetyl-alpha-D-glucosamine + diphosphate. It functions in the pathway nucleotide-sugar biosynthesis; UDP-N-acetyl-alpha-D-glucosamine biosynthesis; N-acetyl-alpha-D-glucosamine 1-phosphate from alpha-D-glucosamine 6-phosphate (route II): step 2/2. It participates in nucleotide-sugar biosynthesis; UDP-N-acetyl-alpha-D-glucosamine biosynthesis; UDP-N-acetyl-alpha-D-glucosamine from N-acetyl-alpha-D-glucosamine 1-phosphate: step 1/1. The protein operates within bacterial outer membrane biogenesis; LPS lipid A biosynthesis. Functionally, catalyzes the last two sequential reactions in the de novo biosynthetic pathway for UDP-N-acetylglucosamine (UDP-GlcNAc). The C-terminal domain catalyzes the transfer of acetyl group from acetyl coenzyme A to glucosamine-1-phosphate (GlcN-1-P) to produce N-acetylglucosamine-1-phosphate (GlcNAc-1-P), which is converted into UDP-GlcNAc by the transfer of uridine 5-monophosphate (from uridine 5-triphosphate), a reaction catalyzed by the N-terminal domain. The chain is Bifunctional protein GlmU from Wigglesworthia glossinidia brevipalpis.